Here is a 506-residue protein sequence, read N- to C-terminus: Aldehyde dehydrogenase [NAD(P)+] 1 (506 aa).

The active-site Proton acceptor is the E268. C302 (nucleophile) is an active-site residue.

This sequence belongs to the aldehyde dehydrogenase family.

The protein localises to the cytoplasm. It catalyses the reaction an aldehyde + NAD(+) + H2O = a carboxylate + NADH + 2 H(+). The catalysed reaction is 3-aminopropanal + NAD(+) + H2O = beta-alanine + NADH + 2 H(+). Functionally, cytoplasmic aldehyde dehydrogenase involved in ethanol oxidation. Required for pantothenic acid production through the conversion of 3-aminopropanal to beta-alanine, an intermediate in pantothenic acid (vitamin B5) and coenzyme A (CoA) biosynthesis. This Saccharomyces cerevisiae (strain ATCC 204508 / S288c) (Baker's yeast) protein is Aldehyde dehydrogenase [NAD(P)+] 1 (ALD2).